Reading from the N-terminus, the 560-residue chain is Oxygen-dependent choline dehydrogenase 1 (560 aa).

8–37 (DYIIIGAGSAGNVLATRLTEDPDVQVLLLE) contacts FAD. Catalysis depends on H475, which acts as the Proton acceptor.

It belongs to the GMC oxidoreductase family. Requires FAD as cofactor.

The enzyme catalyses choline + A = betaine aldehyde + AH2. The catalysed reaction is betaine aldehyde + NAD(+) + H2O = glycine betaine + NADH + 2 H(+). Its pathway is amine and polyamine biosynthesis; betaine biosynthesis via choline pathway; betaine aldehyde from choline (cytochrome c reductase route): step 1/1. In terms of biological role, involved in the biosynthesis of the osmoprotectant glycine betaine. Catalyzes the oxidation of choline to betaine aldehyde and betaine aldehyde to glycine betaine at the same rate. The protein is Oxygen-dependent choline dehydrogenase 1 of Chromohalobacter salexigens (strain ATCC BAA-138 / DSM 3043 / CIP 106854 / NCIMB 13768 / 1H11).